The chain runs to 259 residues: uncharacterized protein (259 aa).

The HD domain maps to 51–173; that stretch reads GKTHAKIVAN…IAVADGTDMT (123 aa).

This is an uncharacterized protein from Methanocaldococcus jannaschii (strain ATCC 43067 / DSM 2661 / JAL-1 / JCM 10045 / NBRC 100440) (Methanococcus jannaschii).